The chain runs to 397 residues: Elongation factor Tu (397 aa).

In terms of domain architecture, tr-type G spans 10–206; it reads KPHCNIGTIG…AVDTWIPDPQ (197 aa). Positions 19 to 26 are G1; the sequence is GHVDHGKT. 19–26 serves as a coordination point for GTP; sequence GHVDHGKT. Position 26 (T26) interacts with Mg(2+). Residues 61–65 are G2; the sequence is GITIS. The G3 stretch occupies residues 82–85; sequence DCPG. Residues 82-86 and 137-140 contribute to the GTP site; these read DCPGH and NKCD. The interval 137-140 is G4; that stretch reads NKCD. The interval 175–177 is G5; that stretch reads SAL.

It belongs to the TRAFAC class translation factor GTPase superfamily. Classic translation factor GTPase family. EF-Tu/EF-1A subfamily. As to quaternary structure, monomer.

The protein resides in the cytoplasm. It catalyses the reaction GTP + H2O = GDP + phosphate + H(+). Functionally, GTP hydrolase that promotes the GTP-dependent binding of aminoacyl-tRNA to the A-site of ribosomes during protein biosynthesis. This chain is Elongation factor Tu, found in Lachnoclostridium phytofermentans (strain ATCC 700394 / DSM 18823 / ISDg) (Clostridium phytofermentans).